A 251-amino-acid chain; its full sequence is Azurocidin (251 aa).

Residues 1 to 19 (MTRLTVLALLAGLLASSRA) form the signal peptide. A propeptide spans 20 to 26 (GSSPLLD) (removed in mature form). A propeptide spans 25 to 26 (LD) (dipeptide found in non-mature form). Residues 27-244 (IVGGRKARPR…FRDWIDGVLN (218 aa)) form the Peptidase S1 domain. The possesses antibiotic activity stretch occupies residues 46–70 (NQGRHFCGGALIHARFVMTAASCFQ). A disulfide bridge connects residues cysteine 52 and cysteine 68. Asparagine 126 is a glycosylation site (N-linked (GlcNAc...) asparagine; partial). N-linked (GlcNAc...) asparagine glycosylation is present at asparagine 140. 3 disulfide bridges follow: cysteine 149-cysteine 207, cysteine 180-cysteine 186, and cysteine 197-cysteine 222. An N-linked (GlcNAc...) asparagine; partial glycan is attached at asparagine 171. A propeptide spans 249 to 251 (GPA) (removed in mature form).

The protein belongs to the peptidase S1 family. Elastase subfamily. In terms of processing, cleavage of the N-terminal propeptide which is composed of 7 amino acids occurs in two steps. The initial cleavage of 5 amino acids is followed by the cleavage of a dipeptide to produce the mature form.

Its subcellular location is the cytoplasmic granule membrane. This is a neutrophil granule-derived antibacterial and monocyte- and fibroblast-specific chemotactic glycoprotein. Binds heparin. The cytotoxic action is limited to many species of Gram-negative bacteria; this specificity may be explained by a strong affinity of the very basic N-terminal half for the negatively charged lipopolysaccharides that are unique to the Gram-negative bacterial outer envelope. It may play a role in mediating recruitment of monocytes in the second wave of inflammation. Has antibacterial activity against the Gram-negative bacterium P.aeruginosa, this activity is inhibited by LPS from P.aeruginosa. Acting alone, it does not have antimicrobial activity against the Gram-negative bacteria A.actinomycetemcomitans ATCC 29532, A.actinomycetemcomitans NCTC 9709, A.actinomycetemcomitans FDC-Y4, H.aphrophilus ATCC 13252, E.corrodens ATCC 23834, C.sputigena ATCC 33123, Capnocytophaga sp ATCC 33124, Capnocytophaga sp ATCC 27872 or E.coli ML-35. Has antibacterial activity against C.sputigena ATCC 33123 when acting synergistically with either elastase or cathepsin G. This Homo sapiens (Human) protein is Azurocidin.